A 1324-amino-acid polypeptide reads, in one-letter code: MDSESDDNPNDPEDRKKWGHKDVEHWRAVSNVHYYAREGYFGTAILVCDGRLATIKDPALAILKGVCLTLLGKIPDAIRHLETFVTDNDVALGALHALKWAHASAFNPDNKSIVEIETEISTRARNEKTPYTSYATASEVLYFAGEYQKSKQMLDIARKRATEKHAKHYCLLGWIELALGKKQKSTQELFEKAGGQEYPDGNIGRCKILEGHHSAPEMKVAANELAISTIHFLPGHIEKAKASIMMKDWRGVMDCIMNADQPEGSNPYIEVLRTVHGICYAGEVSMLKRTLQLLLKSLDENEATNHVLYARITKLLVSISGRDEKILRHARDFLTRALKISRKPDYVALSMRIAFGLGGAKEVSTLSQELVALDCEDSYAVLSSVVSMLMISRVSDARAQFDILPSAHPKLLESPLYYLIASVLAKQSKDKSFENFRQHIENLVEMLRNQLQSFPFGLDYLSLFSSDLLYSAVEQCFDFYPLVPIKAPDDCMKLTAKTLQMIYDVAPGLAHCTLQLARNSYLCSNTNAAEKWIEKVLDKDDSLADAHILRAELILDRGGKITDADDALVTGLNFNFKLRETSLYHLIKSKTFKKRNENDEAIKTLKMALQIPRKEPSKNLFQPKESADTHKISVQLELIDTLQHMKRIQEAETTMTDALAEWAGQPEQDQLVIAQAQLYLTKGHVERALGILKKIQPGQSNFHLSRIKMAEIYLEEKKDKRMFAACYRELLKVEATPGSYSLLGDAFMKVQEPEDAINFYEQALKMQSKDVQLAEKIGEAYVMAHLYSKAVNFYESSMNIYKDKNMRLKLANLLLKLRNFEKCEKVLRAPFERDPEPVGTETIQTYIQFLLLLAECHEMMDNVPEAMNDFEKAKSLHSRIQDKTLTAALKKEGARICNLQAELLYRRREFSQAVDICKQALAYHETDLKANLLLSKIFKEENKWTLVLQPCQTVIQVDPHNDEANSILADFYYIRSEAAHASTSYTTLLNTNPQHWHALSRVVELFCRNGEQNAAEKHLDRAKEVNPRCVTESGYNVCRGRFEWYTGDQNEALRYYSRTKDSAAGWREKALYYMIDICLNPDNEIIIDENSVENPETTIVEEASEQQKLAKYYLDLLGKLPTTDRFLLAQNFIRMHTTDKSAIQAALDEFNRMAFNADRSQVTNVGAVFGVARGHVLLKQVQKAKTVLKMVNGRVWNFDDSDYLEKCWLMLADIYINQNKNDQAVTFLDLVFKYNCNCLKAFELYGYMREKEQKYVEAYKMYEKAFMATKERNPGFGYKLAFTYLKAKRLFACIETCQKVLDLNPQYPKIKKEIMDKAKALIRT.

16 TPR repeats span residues 58–91, 414–446, 582–615, 669–702, 737–770, 772–804, 806–837, 847–880, 894–927, 929–961, 963–995, 997–1029, 1033–1066, 1205–1238, 1240–1272, and 1274–1307; these read PALA…NDVA, SPLY…LVEM, SLYH…PRKE, DQLV…QSNF, PGSY…QSKD, QLAE…YKDK, MRLK…DPEP, IQFL…HSRI, ARIC…HETD, KANL…DPHN, EANS…NPQH, HALS…NPRC, SGYN…AAGW, EKCW…NCNC, KAFE…TKER, and PGFG…NPQY.

Belongs to the TTC21 family. Component of the IFT complex A (IFT-A) composed of at least che-11, daf-10, dyf-2, ift-139, ift-43 and ifta-1. In terms of tissue distribution, expressed in ciliated sensory neurons in the head and tail.

It localises to the cell projection. The protein resides in the cilium. Its subcellular location is the cytoplasm. The protein localises to the cytoskeleton. It is found in the cilium basal body. It localises to the dendrite. Component of the IFT complex A (IFT-A), a complex required for retrograde ciliary transport. In particular, may act redundantly with the intraflagellar transport protein ift-43 to regulate the transport of specific ciliary cargo proteins such as che-3 which are related to motility. Functions in cilia biogenesis. In Caenorhabditis elegans, this protein is Tetratricopeptide repeat protein 21 homolog.